Reading from the N-terminus, the 158-residue chain is NADH-quinone oxidoreductase subunit B 2 (158 aa).

[4Fe-4S] cluster-binding residues include Cys37, Cys38, Cys102, and Cys132.

This sequence belongs to the complex I 20 kDa subunit family. NDH-1 is composed of 14 different subunits. Subunits NuoB, C, D, E, F, and G constitute the peripheral sector of the complex. The cofactor is [4Fe-4S] cluster.

It is found in the cell inner membrane. The enzyme catalyses a quinone + NADH + 5 H(+)(in) = a quinol + NAD(+) + 4 H(+)(out). In terms of biological role, NDH-1 shuttles electrons from NADH, via FMN and iron-sulfur (Fe-S) centers, to quinones in the respiratory chain. Couples the redox reaction to proton translocation (for every two electrons transferred, four hydrogen ions are translocated across the cytoplasmic membrane), and thus conserves the redox energy in a proton gradient. The polypeptide is NADH-quinone oxidoreductase subunit B 2 (Nitrosospira multiformis (strain ATCC 25196 / NCIMB 11849 / C 71)).